The sequence spans 391 residues: Phosphopentomutase (391 aa).

Mn(2+) is bound by residues D12, D285, H290, D326, H327, and H338.

Belongs to the phosphopentomutase family. Mn(2+) serves as cofactor.

The protein resides in the cytoplasm. It carries out the reaction 2-deoxy-alpha-D-ribose 1-phosphate = 2-deoxy-D-ribose 5-phosphate. It catalyses the reaction alpha-D-ribose 1-phosphate = D-ribose 5-phosphate. It participates in carbohydrate degradation; 2-deoxy-D-ribose 1-phosphate degradation; D-glyceraldehyde 3-phosphate and acetaldehyde from 2-deoxy-alpha-D-ribose 1-phosphate: step 1/2. Isomerase that catalyzes the conversion of deoxy-ribose 1-phosphate (dRib-1-P) and ribose 1-phosphate (Rib-1-P) to deoxy-ribose 5-phosphate (dRib-5-P) and ribose 5-phosphate (Rib-5-P), respectively. The protein is Phosphopentomutase of Herpetosiphon aurantiacus (strain ATCC 23779 / DSM 785 / 114-95).